Reading from the N-terminus, the 834-residue chain is Translation factor GUF1 homolog, mitochondrial (834 aa).

Residues 1-66 constitute a mitochondrion transit peptide; the sequence is MKLCGVRSSG…RPLLAEPRRY (66 aa). Residues 129 to 314 form the tr-type G domain; it reads ACIRNVSVVA…HIIDKVPPPC (186 aa). Residues 138 to 145, 205 to 209, and 259 to 262 contribute to the GTP site; these read AHVDHGKT, DTPGH, and TKMD. Disordered stretches follow at residues 363–385 and 476–507; these read GAAS…ASGG and TGSP…SSSV. Over residues 488 to 507 the composition is skewed to low complexity; it reads ATAAETASSDDASGSGSSSV.

Belongs to the TRAFAC class translation factor GTPase superfamily. Classic translation factor GTPase family. LepA subfamily.

Its subcellular location is the mitochondrion inner membrane. The enzyme catalyses GTP + H2O = GDP + phosphate + H(+). Functionally, promotes mitochondrial protein synthesis. May act as a fidelity factor of the translation reaction, by catalyzing a one-codon backward translocation of tRNAs on improperly translocated ribosomes. Binds to mitochondrial ribosomes in a GTP-dependent manner. In Leishmania infantum, this protein is Translation factor GUF1 homolog, mitochondrial.